The primary structure comprises 456 residues: Glutamate-gated chloride channel (456 aa).

The first 22 residues, 1–22, serve as a signal peptide directing secretion; the sequence is MGSGHYFWAILYFASLCSASLA. At 23-245 the chain is on the extracellular side; that stretch reads NNAKINFREK…VDLLFKREFS (223 aa). Residues arginine 71, arginine 90, and serine 154 each coordinate L-glutamate. Cysteine 163 and cysteine 177 are joined by a disulfide. Serine 183 provides a ligand contact to L-glutamate. A disulfide bridge connects residues cysteine 222 and cysteine 233. Residues 246–268 traverse the membrane as a helical segment; it reads YYLIQIYIPCCMLVIVSWVSFWL. Topologically, residues 269–273 are cytoplasmic; it reads DQGAV. A helical membrane pass occupies residues 274–295; it reads PARVSLGVTTLLTMATQTSGIN. At 296 to 302 the chain is on the extracellular side; that stretch reads ASLPPVS. A helical membrane pass occupies residues 303–323; the sequence is YTKAIDVWTGVCLTFVFGALL. At 324 to 426 the chain is on the cytoplasmic side; sequence EFALVNYASR…RQCSRSKRID (103 aa). The chain crosses the membrane as a helical span at residues 427–450; it reads VISRITFPLVFALFNLVYWSTYLF. At 451–456 the chain is on the extracellular side; the sequence is REEEDE.

This sequence belongs to the ligand-gated ion channel (TC 1.A.9) family. Glutamate-gated chloride channel (TC 1.A.9.4) subfamily. In terms of assembly, pentamer. Homomultimer. As to expression, expressed in the medulla layers (at protein level). Expressed in all major ON pathway medulla neurons (Mi1, Tm3, Mi4, and Mi9) and in OFF pathway neurons (Tm1, Tm2, Tm4, and Tm9).

The protein localises to the postsynaptic cell membrane. The protein resides in the cell membrane. Its activity is regulated as follows. Glutamate binding triggers a rapidly reversible current, while the anti-helmintic drug ivermectin triggers a permanently open channel configuration. Inhibited by picrotoxin. Glutamate-gated chloride channel subunit. Together with Gamma-aminobutyric acid receptor Rdl, plays an important role in the visual response by regulating the activity of ON/OFF-selective neurons. This is Glutamate-gated chloride channel (GluClalpha) from Drosophila melanogaster (Fruit fly).